The following is a 732-amino-acid chain: Ets DNA-binding protein pokkuri (732 aa).

Residues 33 to 117 (SSQLAELKTQ…NVLQMLIIES (85 aa)) form the PNT domain. Residues 133-295 (SRYPLSPHSH…PPGTPILKDI (163 aa)) are disordered. The segment covering 141 to 157 (SHPPTPTWPPLNAPPEN) has biased composition (pro residues). Over residues 176–193 (NSVTLSPPPSVDSQASSP) the composition is skewed to polar residues. Residues 205 to 240 (GAAPGSAGGSAPAAGGATNTSNPTSSSASSTGSNGS) show a composition bias toward low complexity. A DNA-binding region (ETS) is located at residues 396–479 (RLLWDFLQQL…QGERHCYQFL (84 aa)). Disordered regions lie at residues 496 to 548 (QSTP…NGPM), 590 to 647 (GPPP…TATS), and 674 to 732 (VAAS…HMQQ). Residues 506–539 (SPSMPQGSSQAPGSPAGQNWNPQQQSQQQQQSPQ) are compositionally biased toward low complexity. Residue Ser543 is modified to Phosphoserine. Positions 637–647 (LSVSSKSTATS) are enriched in polar residues. Phosphoserine is present on residues Ser677, Ser682, and Ser696. Over residues 690 to 709 (AGASNASSSPRPMDQASEQA) the composition is skewed to polar residues.

Belongs to the ETS family. Post-translationally, phosphorylated in response to MAPK signaling. May be phosphorylated by rl. Expressed in R7 and cone cells of the eye.

It is found in the nucleus. Functionally, ets-related protein that functions as a negative regulator of photoreceptor development acting antagonistically to pnt and the proneural signal mediated by RAS. It acts upstream of SINA to inhibit R7 development. This Drosophila melanogaster (Fruit fly) protein is Ets DNA-binding protein pokkuri (aop).